The following is a 442-amino-acid chain: Trigger factor (442 aa).

In terms of domain architecture, PPIase FKBP-type spans 165–250 (DDRVIIDFEG…LQKVMAPELP (86 aa)).

The protein belongs to the FKBP-type PPIase family. Tig subfamily.

The protein resides in the cytoplasm. It carries out the reaction [protein]-peptidylproline (omega=180) = [protein]-peptidylproline (omega=0). Involved in protein export. Acts as a chaperone by maintaining the newly synthesized protein in an open conformation. Functions as a peptidyl-prolyl cis-trans isomerase. The chain is Trigger factor from Coxiella burnetii (strain CbuG_Q212) (Coxiella burnetii (strain Q212)).